Consider the following 569-residue polypeptide: Toxin YxiD (569 aa).

The LXG domain occupies 1-235 (MKTLDVHALH…NPQMKQADDS (235 aa)). The stretch at 8-91 (ALHEGIQHTI…QHAISSVESN (84 aa)) forms a coiled coil. A disordered region spans residues 548 to 569 (HQAGIHGTGSPANELFKGGKKK).

In the N-terminal section; belongs to the LXG family. As to quaternary structure, probably interacts with cognate immunity protein YxxD but not with non-cognate immunity proteins. The interaction inhibits the toxic activity of YxxD.

It is found in the secreted. Functionally, toxic component of one of 6 LXG toxin-immunity modules in this strain. They promote kin selection, mediate competition in biofilms, and drive spatial segregation of different strains, indicating that LXG toxins may help avoid warfare between strains in biofilms. Mediates intercellular competition during biofilm formation; disruption of the operon disadvantages the bacteria, but overexpression of the cognate immunity protein restores growth in competition with wild-type. Overexpression alone in situ causes growth arrest but not cell lysis, a large decrease in chromosomal DNA content and the production of anucleate cells. No effect is seen on rRNA. Co-overexpression with cognate immunity protein YxxD does not cause growth arrest. The toxic effect is not dependent on the epsA and tapA operons which are required for biofilm formation. This Bacillus subtilis (strain 168) protein is Toxin YxiD (yxiD).